The primary structure comprises 403 residues: Dynactin subunit 2 (403 aa).

Positions 1–26 are disordered; the sequence is MADPKYADLPGIARNEPDVYETSDLP. At Ala2 the chain carries N-acetylalanine. Position 6 is a phosphotyrosine (Tyr6). Ser83 carries the post-translational modification Phosphoserine. Position 86 is a phosphotyrosine (Tyr86). Residues 100–130 adopt a coiled-coil conformation; that stretch reads QQKYQRLLHEVQELTTEVEKIKTTVKESATE. A phosphothreonine mark is found at Thr134 and Thr200. The tract at residues 184–204 is disordered; it reads TKNSKGTGSGGKTTSGTPPDS. Positions 216 to 248 form a coiled coil; the sequence is EQDKFSQAAKVAELEKRLTELEATVRCDQDAQN. The residue at position 322 (Ser322) is a Phosphoserine.

Belongs to the dynactin subunit 2 family. In terms of assembly, subunit of dynactin, a multiprotein complex part of a tripartite complex with dynein and a adapter, such as BICDL1, BICD2 or HOOK3. The dynactin complex is built around ACTR1A/ACTB filament and consists of an actin-related filament composed of a shoulder domain, a pointed end and a barbed end. Its length is defined by its flexible shoulder domain. The soulder is composed of 2 DCTN1 subunits, 4 DCTN2 and 2 DCTN3. The 4 DCNT2 (via N-terminus) bind the ACTR1A filament and act as molecular rulers to determine the length. The pointed end is important for binding dynein-dynactin cargo adapters and consists of 4 subunits: ACTR10, DCNT4, DCTN5 and DCTN6. The barbed end is composed of a CAPZA1:CAPZB heterodimers, which binds ACTR1A/ACTB filament and dynactin and stabilizes dynactin. Interacts with BICD2 and CEP135. Interacts with DYNAP. Interacts with ECPAS. Interacts with MAPRE1.

It localises to the cytoplasm. Its subcellular location is the cytoskeleton. The protein resides in the microtubule organizing center. It is found in the centrosome. The protein localises to the membrane. Part of the dynactin complex that activates the molecular motor dynein for ultra-processive transport along microtubules. In the dynactin soulder domain, binds the ACTR1A filament and acts as a molecular ruler to determine the length. Modulates cytoplasmic dynein binding to an organelle, and plays a role in prometaphase chromosome alignment and spindle organization during mitosis. Involved in anchoring microtubules to centrosomes. May play a role in synapse formation during brain development. The sequence is that of Dynactin subunit 2 (DCTN2) from Bos taurus (Bovine).